We begin with the raw amino-acid sequence, 348 residues long: Phosphoribosylformylglycinamidine cyclo-ligase (348 aa).

It belongs to the AIR synthase family.

The protein localises to the cytoplasm. The enzyme catalyses 2-formamido-N(1)-(5-O-phospho-beta-D-ribosyl)acetamidine + ATP = 5-amino-1-(5-phospho-beta-D-ribosyl)imidazole + ADP + phosphate + H(+). The protein operates within purine metabolism; IMP biosynthesis via de novo pathway; 5-amino-1-(5-phospho-D-ribosyl)imidazole from N(2)-formyl-N(1)-(5-phospho-D-ribosyl)glycinamide: step 2/2. The protein is Phosphoribosylformylglycinamidine cyclo-ligase of Roseobacter denitrificans (strain ATCC 33942 / OCh 114) (Erythrobacter sp. (strain OCh 114)).